We begin with the raw amino-acid sequence, 441 residues long: G2/mitotic-specific cyclin-2 (441 aa).

It belongs to the cyclin family. Cyclin AB subfamily. In terms of assembly, interacts with the CDC2 and CDK2 protein kinases to form a serine/threonine kinase holoenzyme complex. The cyclin subunit imparts substrate specificity to the complex.

In terms of biological role, essential for the control of the cell cycle at the G2/M (mitosis) transition. G2/M cyclins accumulate steadily during G2 and are abruptly destroyed at mitosis. The sequence is that of G2/mitotic-specific cyclin-2 from Antirrhinum majus (Garden snapdragon).